A 193-amino-acid chain; its full sequence is Peptidyl-tRNA hydrolase (193 aa).

Tyr-17 is a tRNA binding site. The active-site Proton acceptor is the His-22. TRNA is bound by residues Tyr-68, Asn-70, and Asn-116.

It belongs to the PTH family. In terms of assembly, monomer.

It is found in the cytoplasm. It catalyses the reaction an N-acyl-L-alpha-aminoacyl-tRNA + H2O = an N-acyl-L-amino acid + a tRNA + H(+). Its function is as follows. Hydrolyzes ribosome-free peptidyl-tRNAs (with 1 or more amino acids incorporated), which drop off the ribosome during protein synthesis, or as a result of ribosome stalling. In terms of biological role, catalyzes the release of premature peptidyl moieties from peptidyl-tRNA molecules trapped in stalled 50S ribosomal subunits, and thus maintains levels of free tRNAs and 50S ribosomes. This is Peptidyl-tRNA hydrolase from Chromobacterium violaceum (strain ATCC 12472 / DSM 30191 / JCM 1249 / CCUG 213 / NBRC 12614 / NCIMB 9131 / NCTC 9757 / MK).